We begin with the raw amino-acid sequence, 485 residues long: Proline betaine:corrinoid methyltransferase (485 aa).

This sequence belongs to the trimethylamine methyltransferase family. As to quaternary structure, the proline betaine:THF methyl transfer system is composed of two methyltransferases, MtpB and MtqA, and the corrinoid protein MtqC.

It carries out the reaction Co(I)-[quaternary-amine-specific corrinoid protein] + L-proline betaine + H(+) = methyl-Co(III)-[quaternary-amine-specific corrinoid protein] + N-methyl-L-proline. Involved in the degradation of the quaternary amine L-proline betaine. Component of a corrinoid-dependent methyltransferase system that transfers a methyl group from L-proline betaine to tetrahydrofolate (THF), forming methyl-THF, a key intermediate in the Wood-Ljungdahl acetogenesis pathway. MtpB catalyzes the methylation of the corrinoid protein MtqC, using L-proline betaine as the methyl donor. Shows weak activity with some other quaternary amines, including carnitine, phosphocholine, glycine betaine or betonicine, but cannot methylate free cob(I)alamin. In Eubacterium limosum, this protein is Proline betaine:corrinoid methyltransferase.